The chain runs to 377 residues: tRNA-splicing endonuclease subunit SEN2 (377 aa).

The stretch at 119–174 forms a coiled coil; the sequence is ETEMTLEKVTQQRRLQRLEFKKERAKLERELLELRKKGGHIDEENILLEKQRESLR. Residues tyrosine 289, histidine 297, and lysine 328 contribute to the active site.

It belongs to the tRNA-intron endonuclease family. Heterotetramer composed of SEN2, SEN15, SEN34 and SEN54. Interacts directly with SEN54.

It localises to the nucleus. It is found in the endomembrane system. Its subcellular location is the mitochondrion outer membrane. The enzyme catalyses pretRNA = a 3'-half-tRNA molecule with a 5'-OH end + a 5'-half-tRNA molecule with a 2',3'-cyclic phosphate end + an intron with a 2',3'-cyclic phosphate and a 5'-hydroxyl terminus.. In terms of biological role, constitutes one of the two catalytic subunit of the tRNA-splicing endonuclease complex, a complex responsible for identification and cleavage of the splice sites in pre-tRNA. It cleaves pre-tRNA at the 5'- and 3'-splice sites to release the intron. The products are an intron and two tRNA half-molecules bearing 2',3'-cyclic phosphate and 5'-OH termini. There are no conserved sequences at the splice sites, but the intron is invariably located at the same site in the gene, placing the splice sites an invariant distance from the constant structural features of the tRNA body. This subunit may anchor the endonuclease complex to the nuclear membrane. Probably carries the active site for 5'-splice site cleavage. In Saccharomyces cerevisiae (strain ATCC 204508 / S288c) (Baker's yeast), this protein is tRNA-splicing endonuclease subunit SEN2 (SEN2).